We begin with the raw amino-acid sequence, 205 residues long: Protein-L-isoaspartate O-methyltransferase (205 aa).

Serine 56 is a catalytic residue.

Belongs to the methyltransferase superfamily. L-isoaspartyl/D-aspartyl protein methyltransferase family.

Its subcellular location is the cytoplasm. The enzyme catalyses [protein]-L-isoaspartate + S-adenosyl-L-methionine = [protein]-L-isoaspartate alpha-methyl ester + S-adenosyl-L-homocysteine. Its function is as follows. Catalyzes the methyl esterification of L-isoaspartyl residues in peptides and proteins that result from spontaneous decomposition of normal L-aspartyl and L-asparaginyl residues. It plays a role in the repair and/or degradation of damaged proteins. The protein is Protein-L-isoaspartate O-methyltransferase of Aeromonas salmonicida (strain A449).